The primary structure comprises 171 residues: UPF0398 protein SPy_1647/M5005_Spy1353 (171 aa).

The protein belongs to the UPF0398 family.

This is UPF0398 protein SPy_1647/M5005_Spy1353 from Streptococcus pyogenes serotype M1.